The primary structure comprises 55 residues: Spermatid nuclear transition protein 1 (55 aa).

Positions 1-42 (MSTSRKLKSHGMRRSKSRSPHKGVKRGGSKRKYRKGNLKSRK) are enriched in basic residues. The segment at 1 to 55 (MSTSRKLKSHGMRRSKSRSPHKGVKRGGSKRKYRKGNLKSRKRGDDANRNYRSHL) is disordered. Residues serine 9 and serine 40 each carry the phosphoserine modification.

This sequence belongs to the nuclear transition protein 1 family. In terms of tissue distribution, expressed by spermatids (at protein level).

It is found in the nucleus. It localises to the chromosome. Its function is as follows. Plays a key role in the replacement of histones to protamine in the elongating spermatids of mammals. In condensing spermatids, loaded onto the nucleosomes, where it promotes the recruitment and processing of protamines, which are responsible for histone eviction. The polypeptide is Spermatid nuclear transition protein 1 (TNP1) (Homo sapiens (Human)).